A 381-amino-acid chain; its full sequence is cAMP-dependent protein kinase type I-beta regulatory subunit (381 aa).

A dimerization and phosphorylation region spans residues Ala-2–Val-136. At Ser-3 the chain carries Phosphoserine. Tyr-21 carries the post-translational modification 3'-nitrotyrosine. Residues Ala-67–Gly-98 are disordered. Ser-77 and Ser-83 each carry phosphoserine. Thr-85 is modified (phosphothreonine). Residues Arg-96 to Val-100 carry the Pseudophosphorylation motif motif. Arg-97 carries the post-translational modification Omega-N-methylarginine. Residues Leu-137 to Ser-254, Glu-202, Arg-211, Ile-255 to Val-381, Glu-326, and Arg-335 contribute to the 3',5'-cyclic AMP site.

The protein belongs to the cAMP-dependent kinase regulatory chain family. As to quaternary structure, the inactive holoenzyme is composed of two regulatory chains and two catalytic chains. Activation by cAMP releases the two active catalytic monomers and the regulatory dimer. Interacts with PRKX; regulates this cAMP-dependent protein kinase. Interacts with C2orf88/smAKAP; this interaction may target PRKAR1B to the plasma membrane. In terms of processing, the pseudophosphorylation site binds to the substrate-binding region of the catalytic chain, resulting in the inhibition of its activity. In terms of tissue distribution, four types of regulatory chains are found: I-alpha, I-beta, II-alpha, and II-beta. Their expression varies among tissues and is in some cases constitutive and in others inducible.

It localises to the cell membrane. Functionally, regulatory subunit of the cAMP-dependent protein kinases involved in cAMP signaling in cells. In Homo sapiens (Human), this protein is cAMP-dependent protein kinase type I-beta regulatory subunit (PRKAR1B).